The sequence spans 630 residues: Plastin-3 (630 aa).

EF-hand domains lie at 12-47 (DELD…ANMP) and 52-87 (KVRE…VKSS). Ca(2+) is bound by residues D25, N27, N29, E36, D65, N67, D69, K71, and E76. 2 actin-binding regions span residues 109–382 (TSEL…ALTK) and 383–627 (PENQ…GRGM). 2 consecutive Calponin-homology (CH) domains span residues 123–239 (EEEK…KIGL) and 267–378 (LSPE…NKYP). Phosphoserine is present on residues S268, S293, S326, and S339. A Phosphothreonine modification is found at T391. 2 consecutive Calponin-homology (CH) domains span residues 397–506 (TREE…RRYT) and 518–627 (KAND…GRGM).

Monomer. As to expression, expressed in a variety of organs, including muscle, brain, uterus and esophagus.

The protein resides in the cytoplasm. Functionally, actin-bundling protein. The protein is Plastin-3 (PLS3) of Homo sapiens (Human).